The following is a 253-amino-acid chain: MALYNVDGIVIRVRNFQDADKIVVLLTREEGKVEAVARGARRPRNRFAAATQLFSHVRAQLFSGRSLDTLSQVEIVESFRQLREDLVRMAYATYACELVDALLPERQRQEAPYLLLLTSLHLWGEPDRDPEPLLRAFELKLLSMLGFRPSLAACVGCGSEAVQQNGGVRFAPVLGGVLCPQCTDEGEGALRLSLGALETMKRLLDGDIRRAHMVRLSGELAAEIDRALSAYILARTERRLKSKEFLDTLRSAR.

This sequence belongs to the RecO family.

Involved in DNA repair and RecF pathway recombination. The protein is DNA repair protein RecO of Symbiobacterium thermophilum (strain DSM 24528 / JCM 14929 / IAM 14863 / T).